The following is a 264-amino-acid chain: Thymidylate synthase (264 aa).

Arg21 contributes to the dUMP binding site. His51 is a binding site for (6R)-5,10-methylene-5,6,7,8-tetrahydrofolate. 126–127 (RR) serves as a coordination point for dUMP. Cys146 (nucleophile) is an active-site residue. DUMP contacts are provided by residues 166–169 (RSAD), Asn177, and 207–209 (HLY). Asp169 contacts (6R)-5,10-methylene-5,6,7,8-tetrahydrofolate. Position 263 (Ala263) interacts with (6R)-5,10-methylene-5,6,7,8-tetrahydrofolate.

The protein belongs to the thymidylate synthase family. Bacterial-type ThyA subfamily. As to quaternary structure, homodimer.

It is found in the cytoplasm. It carries out the reaction dUMP + (6R)-5,10-methylene-5,6,7,8-tetrahydrofolate = 7,8-dihydrofolate + dTMP. It functions in the pathway pyrimidine metabolism; dTTP biosynthesis. Catalyzes the reductive methylation of 2'-deoxyuridine-5'-monophosphate (dUMP) to 2'-deoxythymidine-5'-monophosphate (dTMP) while utilizing 5,10-methylenetetrahydrofolate (mTHF) as the methyl donor and reductant in the reaction, yielding dihydrofolate (DHF) as a by-product. This enzymatic reaction provides an intracellular de novo source of dTMP, an essential precursor for DNA biosynthesis. The polypeptide is Thymidylate synthase (Dechloromonas aromatica (strain RCB)).